The sequence spans 211 residues: FMN-dependent NADH:quinone oxidoreductase (211 aa).

FMN contacts are provided by residues 17–19 (SNS), 102–105 (MWNL), and 146–149 (SRGG).

It belongs to the azoreductase type 1 family. Homodimer. Requires FMN as cofactor.

It carries out the reaction 2 a quinone + NADH + H(+) = 2 a 1,4-benzosemiquinone + NAD(+). The enzyme catalyses N,N-dimethyl-1,4-phenylenediamine + anthranilate + 2 NAD(+) = 2-(4-dimethylaminophenyl)diazenylbenzoate + 2 NADH + 2 H(+). Its function is as follows. Quinone reductase that provides resistance to thiol-specific stress caused by electrophilic quinones. Also exhibits azoreductase activity. Catalyzes the reductive cleavage of the azo bond in aromatic azo compounds to the corresponding amines. This chain is FMN-dependent NADH:quinone oxidoreductase, found in Macrococcus caseolyticus (strain JCSC5402) (Macrococcoides caseolyticum).